The sequence spans 239 residues: 1-(5-phosphoribosyl)-5-[(5-phosphoribosylamino)methylideneamino] imidazole-4-carboxamide isomerase (239 aa).

Aspartate 8 (proton acceptor) is an active-site residue. Residue aspartate 129 is the Proton donor of the active site.

It belongs to the HisA/HisF family.

The protein resides in the cytoplasm. The catalysed reaction is 1-(5-phospho-beta-D-ribosyl)-5-[(5-phospho-beta-D-ribosylamino)methylideneamino]imidazole-4-carboxamide = 5-[(5-phospho-1-deoxy-D-ribulos-1-ylimino)methylamino]-1-(5-phospho-beta-D-ribosyl)imidazole-4-carboxamide. It functions in the pathway amino-acid biosynthesis; L-histidine biosynthesis; L-histidine from 5-phospho-alpha-D-ribose 1-diphosphate: step 4/9. This chain is 1-(5-phosphoribosyl)-5-[(5-phosphoribosylamino)methylideneamino] imidazole-4-carboxamide isomerase, found in Bacillus thuringiensis (strain Al Hakam).